The sequence spans 260 residues: UPF0294 protein plu0699 (260 aa).

It belongs to the UPF0294 family.

It localises to the cytoplasm. The polypeptide is UPF0294 protein plu0699 (Photorhabdus laumondii subsp. laumondii (strain DSM 15139 / CIP 105565 / TT01) (Photorhabdus luminescens subsp. laumondii)).